A 330-amino-acid polypeptide reads, in one-letter code: (11Z)-hexadec-11-enoyl-CoA conjugase (330 aa).

2 helical membrane-spanning segments follow: residues 37 to 57 (IVVMNVIRFSYLHIAGLYGLY) and 65 to 85 (LATSVFAIVLFFLGNFGITAG). The Histidine box-1 motif lies at 87–92 (HRLWSH). Residues 101–121 (LEILLMVFNSIAFQNTIFTWV) traverse the membrane as a helical segment. The short motif at 124 to 128 (HRLHH) is the Histidine box-2 element. Helical transmembrane passes span 185–205 (AIPFIGTICFIIPTLAPMYFW) and 216–238 (TVLRYIFSLNGTFLVNSAAHLWG). The Histidine box-3 signature appears at 264 to 268 (HNYHH).

This sequence belongs to the fatty acid desaturase type 1 family. Fe(2+) is required as a cofactor. As to expression, highly expressed in the pheromone gland.

It is found in the membrane. It catalyses the reaction an 11,12-saturated fatty acyl-CoA + 2 Fe(II)-[cytochrome b5] + O2 + 2 H(+) = an (11Z)-Delta(11)-fatty acyl-CoA + 2 Fe(III)-[cytochrome b5] + 2 H2O. The catalysed reaction is (11Z)-hexadecenoyl-CoA + AH2 + O2 = (10E,12Z)-hexadecadienoyl-CoA + A + 2 H2O. In terms of biological role, fatty acid desaturase that catalyzes 2 consecutive steps in the biosynthesis of bombykol, a sex pheromone produced by the moth. First acts as an acyl-CoA Delta(11) desaturase (1) by catalyzing the formation of Delta(11) fatty acyl precursors. Then acts as a (11Z)-hexadec-11-enoyl-CoA conjugase (2) by converting a single cis double bond at position 11 of (11Z)-hexadec-11-enoyl-CoA into conjugated 10 trans and 12 cis double bonds. This chain is (11Z)-hexadec-11-enoyl-CoA conjugase, found in Bombyx mori (Silk moth).